We begin with the raw amino-acid sequence, 283 residues long: Phosphatidylglycerol--prolipoprotein diacylglyceryl transferase (283 aa).

Helical transmembrane passes span 19–39 (IGPI…LIGV), 59–79 (LSIW…VLFQ), 90–110 (IIAI…GTLA), and 120–140 (VPFW…QAIG). Arg141 contacts a 1,2-diacyl-sn-glycero-3-phospho-(1'-sn-glycerol). A run of 3 helical transmembrane segments spans residues 181 to 201 (TFLY…TLFF), 212 to 232 (VGTL…WIEG), and 245 to 265 (IAQV…AWLY).

The protein belongs to the Lgt family.

It is found in the cell inner membrane. It catalyses the reaction L-cysteinyl-[prolipoprotein] + a 1,2-diacyl-sn-glycero-3-phospho-(1'-sn-glycerol) = an S-1,2-diacyl-sn-glyceryl-L-cysteinyl-[prolipoprotein] + sn-glycerol 1-phosphate + H(+). It functions in the pathway protein modification; lipoprotein biosynthesis (diacylglyceryl transfer). Catalyzes the transfer of the diacylglyceryl group from phosphatidylglycerol to the sulfhydryl group of the N-terminal cysteine of a prolipoprotein, the first step in the formation of mature lipoproteins. This is Phosphatidylglycerol--prolipoprotein diacylglyceryl transferase from Nostoc sp. (strain PCC 7120 / SAG 25.82 / UTEX 2576).